Reading from the N-terminus, the 106-residue chain is Putative defensin-like protein 224 (106 aa).

Residues 1–23 (MKTLSLFFTLVILISSCVSNLMA) form the signal peptide. Intrachain disulfides connect Cys-60-Cys-78, Cys-64-Cys-84, and Cys-68-Cys-86.

This sequence belongs to the DEFL family.

Its subcellular location is the secreted. The sequence is that of Putative defensin-like protein 224 from Arabidopsis thaliana (Mouse-ear cress).